Here is a 455-residue protein sequence, read N- to C-terminus: Phosphoglucosamine mutase (455 aa).

The active-site Phosphoserine intermediate is the serine 104. 4 residues coordinate Mg(2+): serine 104, aspartate 253, aspartate 255, and aspartate 257. A Phosphoserine modification is found at serine 104.

Belongs to the phosphohexose mutase family. Mg(2+) serves as cofactor. In terms of processing, activated by phosphorylation.

It carries out the reaction alpha-D-glucosamine 1-phosphate = D-glucosamine 6-phosphate. In terms of biological role, catalyzes the conversion of glucosamine-6-phosphate to glucosamine-1-phosphate. The chain is Phosphoglucosamine mutase from Psychrobacter cryohalolentis (strain ATCC BAA-1226 / DSM 17306 / VKM B-2378 / K5).